The sequence spans 927 residues: Alpha-catenin-like protein hmp-1 (927 aa).

2 coiled-coil regions span residues 319–354 (TRENRKQKIVAECNNLRQALQELLTEYEKSTGRRDD) and 672–696 (QENQQNLMRRLPEEEKKKIQAQIDI). A disordered region spans residues 901–927 (RNEIETGRDSDDEELDRRHQQRINGRL).

It belongs to the vinculin/alpha-catenin family. In terms of assembly, component of a core catenin-cadherin complex consisting of hmr-1, hmp-1 and hmp-2; the complex localizes to adherens junctions. May interact with hmp-2. Epidermal cells.

Its subcellular location is the cell junction. It localises to the adherens junction. It is found in the cytoplasm. Required for cell migration during body enclosure and cell shape changes during body elongation. Required for proper localization of other junctional components, such as pac-1. The sequence is that of Alpha-catenin-like protein hmp-1 (hmp-1) from Caenorhabditis elegans.